Reading from the N-terminus, the 365-residue chain is UDP-N-acetylglucosamine--N-acetylmuramyl-(pentapeptide) pyrophosphoryl-undecaprenol N-acetylglucosamine transferase (365 aa).

UDP-N-acetyl-alpha-D-glucosamine is bound by residues T12–G14, N123, R166, S194, and Q295.

It belongs to the glycosyltransferase 28 family. MurG subfamily.

Its subcellular location is the cell inner membrane. The enzyme catalyses di-trans,octa-cis-undecaprenyl diphospho-N-acetyl-alpha-D-muramoyl-L-alanyl-D-glutamyl-meso-2,6-diaminopimeloyl-D-alanyl-D-alanine + UDP-N-acetyl-alpha-D-glucosamine = di-trans,octa-cis-undecaprenyl diphospho-[N-acetyl-alpha-D-glucosaminyl-(1-&gt;4)]-N-acetyl-alpha-D-muramoyl-L-alanyl-D-glutamyl-meso-2,6-diaminopimeloyl-D-alanyl-D-alanine + UDP + H(+). The protein operates within cell wall biogenesis; peptidoglycan biosynthesis. Its function is as follows. Cell wall formation. Catalyzes the transfer of a GlcNAc subunit on undecaprenyl-pyrophosphoryl-MurNAc-pentapeptide (lipid intermediate I) to form undecaprenyl-pyrophosphoryl-MurNAc-(pentapeptide)GlcNAc (lipid intermediate II). In Phenylobacterium zucineum (strain HLK1), this protein is UDP-N-acetylglucosamine--N-acetylmuramyl-(pentapeptide) pyrophosphoryl-undecaprenol N-acetylglucosamine transferase.